We begin with the raw amino-acid sequence, 423 residues long: Putative galacturan 1,4-alpha-galacturonidase C (423 aa).

An N-terminal signal peptide occupies residues 1 to 20; sequence MQLRASVLLSFLGLASVGHA. N-linked (GlcNAc...) asparagine glycosylation is found at asparagine 92, asparagine 98, asparagine 118, asparagine 156, asparagine 179, and asparagine 191. 2 PbH1 repeats span residues 215–236 and 238–258; these read ATNIQLTNFVYQGGDDCIAIKP and SYNIDIQNVTCRGGNGIAIGS. The active-site Proton donor is aspartate 229. Cysteine 231 and cysteine 248 are oxidised to a cystine. Residues asparagine 245, asparagine 344, and asparagine 362 are each glycosylated (N-linked (GlcNAc...) asparagine). Cysteine 379 and cysteine 385 are joined by a disulfide. An N-linked (GlcNAc...) asparagine glycan is attached at asparagine 400.

The protein belongs to the glycosyl hydrolase 28 family.

Its subcellular location is the secreted. The enzyme catalyses [(1-&gt;4)-alpha-D-galacturonosyl](n) + H2O = alpha-D-galacturonate + [(1-&gt;4)-alpha-D-galacturonosyl](n-1). Functionally, specific in hydrolyzing the terminal glycosidic bond of polygalacturonic acid and oligogalacturonates. This chain is Putative galacturan 1,4-alpha-galacturonidase C (rgxC), found in Aspergillus niger (strain ATCC MYA-4892 / CBS 513.88 / FGSC A1513).